The primary structure comprises 251 residues: Hydroxypyruvate/pyruvate aldolase (251 aa).

The active-site Proton acceptor is the H44. Residue R69 coordinates 3-hydroxypyruvate. A Mg(2+)-binding site is contributed by E145. 3-hydroxypyruvate contacts are provided by T170 and D171. Residue D171 coordinates Mg(2+).

The protein belongs to the HpcH/HpaI aldolase family. As to quaternary structure, homohexamer. Trimer of homodimers. It depends on Mn(2+) as a cofactor. Mg(2+) is required as a cofactor. Co(2+) serves as cofactor. The cofactor is Zn(2+).

The catalysed reaction is D-glyceraldehyde + 3-hydroxypyruvate = 2-dehydro-D-galactonate. It catalyses the reaction D-glyceraldehyde + pyruvate = 2-dehydro-3-deoxy-L-galactonate. It carries out the reaction L-glyceraldehyde + 3-hydroxypyruvate = (3S,4S,5S)-3,4,5,6-tetrahydroxy-2-oxohexanoate. The enzyme catalyses (R)-lactaldehyde + 3-hydroxypyruvate = (3S,4S,5R)-3,4,5-trihydroxy-2-oxohexanoate. The catalysed reaction is (R)-lactaldehyde + 3-hydroxypyruvate = (3S,4R,5R)-3,4,5-trihydroxy-2-oxohexanoate. It catalyses the reaction (S)-lactaldehyde + 3-hydroxypyruvate = (3S,4S,5S)-3,4,5-trihydroxy-2-oxohexanoate. It carries out the reaction D-erythrose + 3-hydroxypyruvate = (3S,4S,5R,6R)-3,4,5,6,7-pentahydroxy-2-oxoheptanoate. Its activity is regulated as follows. Binding of substrate induces a dynamic movement of the metal cofactor between an inactive coordination sphere to a catalytically active one. When oxaloacetate is used as substrate, activity is increased in the presence of micromolar concentrations of inorganic phosphate. The phosphate does not improve the binding of the substrate, but exclusively increases its rate of decarboxylation. Excessive phosphate concentrations negatively affect the reaction rate by removing the metal cofactor. Aldolase which can catalyze in vitro the aldolisation reaction between hydroxypyruvate (HPA) or pyruvate (PA) and D-glyceraldehyde (D-GA). The condensation of hydroxypyruvate and D-glyceraldehyde produces 2-dehydro-D-galactonate as the major product. The condensation of pyruvate and D-glyceraldehyde produces 2-dehydro-3-deoxy-L-galactonate. Can use other electrophilic substrates such as L-glyceraldehyde, D- and L-lactaldehyde and D-erythrose. Also catalyzes the retro-aldol type decarboxylation of oxaloacetate, a general property of known pyruvate aldolases. In Rhizorhabdus wittichii (strain DSM 6014 / CCUG 31198 / JCM 15750 / NBRC 105917 / EY 4224 / RW1) (Sphingomonas wittichii), this protein is Hydroxypyruvate/pyruvate aldolase.